The primary structure comprises 679 residues: UvrABC system protein B (679 aa).

The 388-residue stretch at 25 to 412 (EGVNQGQRYQ…DGHLAEQVIR (388 aa)) folds into the Helicase ATP-binding domain. 38–45 (GATGTGKT) is a binding site for ATP. Positions 91–114 (YYDYYQPEAYVPVSDTYIAKTSSI) match the Beta-hairpin motif. The 163-residue stretch at 429–591 (QVDDLLAEIR…IVPRPAGKRA (163 aa)) folds into the Helicase C-terminal domain. The UVR domain maps to 639–674 (PELIDQLETKMKEAAKNLNFEEAASLRDRIKKFRQK).

This sequence belongs to the UvrB family. As to quaternary structure, forms a heterotetramer with UvrA during the search for lesions. Interacts with UvrC in an incision complex.

Its subcellular location is the cytoplasm. The UvrABC repair system catalyzes the recognition and processing of DNA lesions. A damage recognition complex composed of 2 UvrA and 2 UvrB subunits scans DNA for abnormalities. Upon binding of the UvrA(2)B(2) complex to a putative damaged site, the DNA wraps around one UvrB monomer. DNA wrap is dependent on ATP binding by UvrB and probably causes local melting of the DNA helix, facilitating insertion of UvrB beta-hairpin between the DNA strands. Then UvrB probes one DNA strand for the presence of a lesion. If a lesion is found the UvrA subunits dissociate and the UvrB-DNA preincision complex is formed. This complex is subsequently bound by UvrC and the second UvrB is released. If no lesion is found, the DNA wraps around the other UvrB subunit that will check the other stand for damage. The chain is UvrABC system protein B from Prochlorococcus marinus (strain MIT 9313).